A 156-amino-acid chain; its full sequence is Small ribosomal subunit protein uS7 (156 aa).

This sequence belongs to the universal ribosomal protein uS7 family. In terms of assembly, part of the 30S ribosomal subunit. Contacts proteins S9 and S11.

In terms of biological role, one of the primary rRNA binding proteins, it binds directly to 16S rRNA where it nucleates assembly of the head domain of the 30S subunit. Is located at the subunit interface close to the decoding center, probably blocks exit of the E-site tRNA. The protein is Small ribosomal subunit protein uS7 of Exiguobacterium sibiricum (strain DSM 17290 / CCUG 55495 / CIP 109462 / JCM 13490 / 255-15).